The chain runs to 250 residues: Bis(5'-nucleosyl)-tetraphosphatase PrpE [asymmetrical] (250 aa).

The protein belongs to the PrpE family. Ni(2+) serves as cofactor.

The enzyme catalyses P(1),P(4)-bis(5'-guanosyl) tetraphosphate + H2O = GMP + GTP + 2 H(+). Its function is as follows. Asymmetrically hydrolyzes Ap4p to yield AMP and ATP. This is Bis(5'-nucleosyl)-tetraphosphatase PrpE [asymmetrical] from Oceanobacillus iheyensis (strain DSM 14371 / CIP 107618 / JCM 11309 / KCTC 3954 / HTE831).